We begin with the raw amino-acid sequence, 473 residues long: MSLLVVGVSHRGTPLSLLERAVLDSDQATKLLDDLVGSPVVREGMVLSTCNRVEIYACVEKFHPALTLISELLSRHGNVNFDEIAGHVHVHYDDRAVQHLFAVAAGLDSMLIGEHQVVGQVRDAFRLAQERGYAGRDLHAIVQDALHAARRVRAETRIDSAGQTLVDVGLQILSERLGPLAGRRALVIGAGAMASVAVAALTRVGITGLTVASRTLRRATALAQRYNGQAAALEKLADLLAETDVVVSCTGSVHPVVDAATLTKAVAGRTNPLGILDIALPHDVDPDVDRLPNVIRVDLETLRPVLENTASSADVRHARHILDEEFDAHVARRAAVGVVPTVVALRDKAARVVAAELRRLEKRLPELDPRQFEEIRTTVHRVVDKLLHAPTVRVQELAGLAGPDSYSEALRTLFDLDPAQPVAISAPQPSTDSPARAAYQPTDEAATDAEPRRDDAEPPSAAAAQDAGRESRP.

Substrate-binding positions include 49–52 (TCNR), Ser109, 114–116 (EHQ), and Gln120. The Nucleophile role is filled by Cys50. 189–194 (GAGAMA) is an NADP(+) binding site. Residues 422 to 473 (VAISAPQPSTDSPARAAYQPTDEAATDAEPRRDDAEPPSAAAAQDAGRESRP) are disordered.

Belongs to the glutamyl-tRNA reductase family. As to quaternary structure, homodimer.

It carries out the reaction (S)-4-amino-5-oxopentanoate + tRNA(Glu) + NADP(+) = L-glutamyl-tRNA(Glu) + NADPH + H(+). The protein operates within porphyrin-containing compound metabolism; protoporphyrin-IX biosynthesis; 5-aminolevulinate from L-glutamyl-tRNA(Glu): step 1/2. Its function is as follows. Catalyzes the NADPH-dependent reduction of glutamyl-tRNA(Glu) to glutamate 1-semialdehyde (GSA). In Acidothermus cellulolyticus (strain ATCC 43068 / DSM 8971 / 11B), this protein is Glutamyl-tRNA reductase.